We begin with the raw amino-acid sequence, 216 residues long: Sugar transporter SWEET1 (216 aa).

Transmembrane regions (helical) follow at residues 3-23 (WMWL…SSGL), 36-56 (ENIQ…WFYY), 65-85 (LMIV…AYLL), 96-116 (QVLV…LWIL), 125-145 (LGLF…ADLA), 157-177 (SFPL…YGLV), and 181-201 (LYIT…FWLF). Residues 6–90 (LLSGACIVFT…GAYLLYSPER (85 aa)) form the MtN3/slv 1 domain. A MtN3/slv 2 domain is found at 124 to 206 (QLGLFCSVFT…RFWLFSQFPP (83 aa)).

This sequence belongs to the SWEET sugar transporter family.

It is found in the golgi apparatus membrane. Its subcellular location is the cell membrane. Functionally, mediates sugar transport across membranes. The polypeptide is Sugar transporter SWEET1 (slc50a1) (Xenopus laevis (African clawed frog)).